A 366-amino-acid chain; its full sequence is Anthranilate phosphoribosyltransferase (366 aa).

5-phospho-alpha-D-ribose 1-diphosphate-binding positions include glycine 79, 82–83 (GD), threonine 87, 89–92 (NIST), 107–115 (KHGNRAATS), and serine 119. Glycine 79 serves as a coordination point for anthranilate. Serine 91 contributes to the Mg(2+) binding site. Residue asparagine 110 participates in anthranilate binding. Arginine 165 serves as a coordination point for anthranilate. Residues aspartate 223 and glutamate 224 each contribute to the Mg(2+) site. The disordered stretch occupies residues 342-366 (ESLSGKSMSMRSRTSILSPASGERV). The span at 345–359 (SGKSMSMRSRTSILS) shows a compositional bias: polar residues.

It belongs to the anthranilate phosphoribosyltransferase family. Homodimer. The cofactor is Mg(2+).

The catalysed reaction is N-(5-phospho-beta-D-ribosyl)anthranilate + diphosphate = 5-phospho-alpha-D-ribose 1-diphosphate + anthranilate. The protein operates within amino-acid biosynthesis; L-tryptophan biosynthesis; L-tryptophan from chorismate: step 2/5. In terms of biological role, catalyzes the transfer of the phosphoribosyl group of 5-phosphorylribose-1-pyrophosphate (PRPP) to anthranilate to yield N-(5'-phosphoribosyl)-anthranilate (PRA). The chain is Anthranilate phosphoribosyltransferase from Methanosarcina barkeri (strain Fusaro / DSM 804).